Here is a 707-residue protein sequence, read N- to C-terminus: Signal transducer and activator of transcription A (707 aa).

Residues 70–89 (LNQSDQFNLGRSNNLTPRTN) show a composition bias toward polar residues. The disordered stretch occupies residues 70–246 (LNQSDQFNLG…GNPNLSSPQP (177 aa)). A compositionally biased stretch (low complexity) spans 90 to 111 (QLQQLQQQQQQQQQPQQQQQQQ). Over residues 112-121 (TYGTQSPIHM) the composition is skewed to polar residues. The segment covering 142–238 (QQSYNNNNSN…QQQQQQQQGN (97 aa)) has biased composition (low complexity). Residues 242–356 (SSPQPILDTI…IQSILNPQHS (115 aa)) adopt a coiled-coil conformation. The DNA-binding element occupies 443–487 (KFLAGTRKCSVNLKFGVNIRDLDNVTTTVESDASNPFVVITNECQ). The SH2 domain occupies 583-686 (WQEGIIYGYM…FLKLHKDTAL (104 aa)). At Tyr-702 the chain carries Phosphotyrosine.

It belongs to the transcription factor STAT family. In terms of assembly, monomer, in the absence of tyrosine phosphorylation. Homodimer, or heterodimer with another family member, when tyrosine phosphorylated. Tyrosine phosphorylated in response to cAMP. Not tyrosine phosphorylated in growing cells. Tyrosine phosphorylation is first detected at the tight mound stage, continues throughout the slug stage and early culmination, and starts to decrease at mid-culmination. Barely detectable in fruiting bodies.

The protein localises to the cytoplasm. Its subcellular location is the nucleus. In terms of biological role, transcription factor that binds to 5'-TTGAATTGA-3' elements in the promoter region of target genes. Functions as a repressor of the ecmB gene. Regulates the differentiation of prestalk cells during development. This chain is Signal transducer and activator of transcription A (dstA), found in Dictyostelium discoideum (Social amoeba).